The sequence spans 195 residues: Phosphoheptose isomerase (195 aa).

An SIS domain is found at Ile-35–Glu-195. Asn-51 to Gly-53 provides a ligand contact to substrate. Zn(2+)-binding residues include His-60 and Glu-64. Substrate contacts are provided by residues Glu-64, Asn-95 to Asp-96, Ser-121 to Ser-123, Ser-126, and Gln-173. Positions 173 and 181 each coordinate Zn(2+).

This sequence belongs to the SIS family. GmhA subfamily. Zn(2+) serves as cofactor.

The protein localises to the cytoplasm. The enzyme catalyses 2 D-sedoheptulose 7-phosphate = D-glycero-alpha-D-manno-heptose 7-phosphate + D-glycero-beta-D-manno-heptose 7-phosphate. Its pathway is carbohydrate biosynthesis; D-glycero-D-manno-heptose 7-phosphate biosynthesis; D-glycero-alpha-D-manno-heptose 7-phosphate and D-glycero-beta-D-manno-heptose 7-phosphate from sedoheptulose 7-phosphate: step 1/1. Catalyzes the isomerization of sedoheptulose 7-phosphate in D-glycero-D-manno-heptose 7-phosphate. This is Phosphoheptose isomerase from Leptospira interrogans serogroup Icterohaemorrhagiae serovar copenhageni (strain Fiocruz L1-130).